The sequence spans 949 residues: General transcription factor II-I repeat domain-containing protein 2B (949 aa).

GTF2I-like repeat units lie at residues 98–192 and 323–417; these read QVHS…QLGG and LSSI…SNVG.

Belongs to the TFII-I family. In terms of tissue distribution, ubiquitous.

It is found in the nucleus. This Homo sapiens (Human) protein is General transcription factor II-I repeat domain-containing protein 2B (GTF2IRD2B).